Reading from the N-terminus, the 271-residue chain is Probable septum site-determining protein MinC (271 aa).

Residues 106-125 (RRAPSPKAADDAPAQPEEPR) form a disordered region. Over residues 110-119 (SPKAADDAPA) the composition is skewed to low complexity.

The protein belongs to the MinC family. In terms of assembly, interacts with MinD and FtsZ.

Cell division inhibitor that blocks the formation of polar Z ring septums. Rapidly oscillates between the poles of the cell to destabilize FtsZ filaments that have formed before they mature into polar Z rings. Prevents FtsZ polymerization. This chain is Probable septum site-determining protein MinC, found in Burkholderia thailandensis (strain ATCC 700388 / DSM 13276 / CCUG 48851 / CIP 106301 / E264).